Reading from the N-terminus, the 592-residue chain is uncharacterized protein (592 aa).

This is an uncharacterized protein from Saccharolobus solfataricus (strain ATCC 35092 / DSM 1617 / JCM 11322 / P2) (Sulfolobus solfataricus).